Consider the following 124-residue polypeptide: ATP synthase epsilon chain (124 aa).

The protein belongs to the ATPase epsilon chain family. F-type ATPases have 2 components, CF(1) - the catalytic core - and CF(0) - the membrane proton channel. CF(1) has five subunits: alpha(3), beta(3), gamma(1), delta(1), epsilon(1). CF(0) has three main subunits: a, b and c.

It localises to the cell membrane. Functionally, produces ATP from ADP in the presence of a proton gradient across the membrane. The chain is ATP synthase epsilon chain from Streptomyces avermitilis (strain ATCC 31267 / DSM 46492 / JCM 5070 / NBRC 14893 / NCIMB 12804 / NRRL 8165 / MA-4680).